The primary structure comprises 346 residues: NADPH dehydrogenase (346 aa).

23–26 (SPMC) contacts FMN. Y28 lines the substrate pocket. The FMN site is built by A60 and Q102. 164–167 (HGAH) is a substrate binding site. FMN-binding positions include R215 and 307-308 (GR).

The protein belongs to the NADH:flavin oxidoreductase/NADH oxidase family. NamA subfamily. In terms of assembly, homotetramer. Requires FMN as cofactor.

The enzyme catalyses A + NADPH + H(+) = AH2 + NADP(+). Its function is as follows. Catalyzes the reduction of the double bond of an array of alpha,beta-unsaturated aldehydes and ketones. It also reduces the nitro group of nitroester and nitroaromatic compounds. It could have a role in detoxification processes. The chain is NADPH dehydrogenase from Bacillus cytotoxicus (strain DSM 22905 / CIP 110041 / 391-98 / NVH 391-98).